The following is a 273-amino-acid chain: Formamidopyrimidine-DNA glycosylase (273 aa).

The active-site Schiff-base intermediate with DNA is Pro-2. The active-site Proton donor is Glu-3. The active-site Proton donor; for beta-elimination activity is Lys-57. The DNA site is built by His-91, Arg-110, and Lys-151. The segment at 236–270 (QVYGRKDEACNDCGTIIEAKVIGQRNSYFCPHCQM) adopts an FPG-type zinc-finger fold. The active-site Proton donor; for delta-elimination activity is the Arg-260.

It belongs to the FPG family. As to quaternary structure, monomer. The cofactor is Zn(2+).

It catalyses the reaction Hydrolysis of DNA containing ring-opened 7-methylguanine residues, releasing 2,6-diamino-4-hydroxy-5-(N-methyl)formamidopyrimidine.. The catalysed reaction is 2'-deoxyribonucleotide-(2'-deoxyribose 5'-phosphate)-2'-deoxyribonucleotide-DNA = a 3'-end 2'-deoxyribonucleotide-(2,3-dehydro-2,3-deoxyribose 5'-phosphate)-DNA + a 5'-end 5'-phospho-2'-deoxyribonucleoside-DNA + H(+). Functionally, involved in base excision repair of DNA damaged by oxidation or by mutagenic agents. Acts as a DNA glycosylase that recognizes and removes damaged bases. Has a preference for oxidized purines, such as 7,8-dihydro-8-oxoguanine (8-oxoG). Has AP (apurinic/apyrimidinic) lyase activity and introduces nicks in the DNA strand. Cleaves the DNA backbone by beta-delta elimination to generate a single-strand break at the site of the removed base with both 3'- and 5'-phosphates. This is Formamidopyrimidine-DNA glycosylase from Actinobacillus pleuropneumoniae serotype 3 (strain JL03).